Here is a 311-residue protein sequence, read N- to C-terminus: Ribosomal protein L11 methyltransferase (311 aa).

Thr160, Gly181, Asp203, and Asn246 together coordinate S-adenosyl-L-methionine.

The protein belongs to the methyltransferase superfamily. PrmA family.

The protein localises to the cytoplasm. It carries out the reaction L-lysyl-[protein] + 3 S-adenosyl-L-methionine = N(6),N(6),N(6)-trimethyl-L-lysyl-[protein] + 3 S-adenosyl-L-homocysteine + 3 H(+). Its function is as follows. Methylates ribosomal protein L11. The sequence is that of Ribosomal protein L11 methyltransferase from Macrococcus caseolyticus (strain JCSC5402) (Macrococcoides caseolyticum).